The primary structure comprises 282 residues: NAD(P)H-hydrate epimerase (282 aa).

The N-terminal 53 residues, 1–53 (MSGLRTLLGLGLLVAGSRLPRVISQQSVCRARPIWWGTQRRGSETMAGAAVKY), are a transit peptide targeting the mitochondrion. S43 carries the post-translational modification Phosphoserine; by PKA. The 211-residue stretch at 59–269 (AQAVDQELFN…ALEKKYQLNL (211 aa)) folds into the YjeF N-terminal domain. 113-117 (NNGGD) is a (6S)-NADPHX binding site. N114 serves as a coordination point for K(+). At K138 the chain carries N6-succinyllysine. D179 is a K(+) binding site. (6S)-NADPHX-binding positions include 183-189 (GFSFKGD) and D212. A K(+)-binding site is contributed by S215.

It belongs to the NnrE/AIBP family. Homodimer. Interacts with APOA1 and APOA2. K(+) serves as cofactor. Post-translationally, undergoes physiological phosphorylation during sperm capacitation, downstream to PKA activation. As to expression, detected in testis and sperm (at protein level). Expressed at high levels in heart, liver, kidney, and testis.

Its subcellular location is the mitochondrion. It localises to the secreted. The catalysed reaction is (6R)-NADHX = (6S)-NADHX. It carries out the reaction (6R)-NADPHX = (6S)-NADPHX. In terms of biological role, catalyzes the epimerization of the S- and R-forms of NAD(P)HX, a damaged form of NAD(P)H that is a result of enzymatic or heat-dependent hydration. This is a prerequisite for the S-specific NAD(P)H-hydrate dehydratase to allow the repair of both epimers of NAD(P)HX. Accelerates cholesterol efflux from endothelial cells to high-density lipoprotein (HDL) and thereby regulates angiogenesis. In Mus musculus (Mouse), this protein is NAD(P)H-hydrate epimerase.